The sequence spans 290 residues: tRNA dimethylallyltransferase (290 aa).

G11–S18 contributes to the ATP binding site. T13–S18 contributes to the substrate binding site. 2 interaction with substrate tRNA regions span residues D36–Q39 and Q158–R162.

The protein belongs to the IPP transferase family. In terms of assembly, monomer. Mg(2+) serves as cofactor.

It carries out the reaction adenosine(37) in tRNA + dimethylallyl diphosphate = N(6)-dimethylallyladenosine(37) in tRNA + diphosphate. Functionally, catalyzes the transfer of a dimethylallyl group onto the adenine at position 37 in tRNAs that read codons beginning with uridine, leading to the formation of N6-(dimethylallyl)adenosine (i(6)A). The protein is tRNA dimethylallyltransferase of Bartonella henselae (strain ATCC 49882 / DSM 28221 / CCUG 30454 / Houston 1) (Rochalimaea henselae).